Here is an 80-residue protein sequence, read N- to C-terminus: Myocilin opposite strand protein (80 aa).

The tract at residues 53–80 (EQAPPPHRTYLTVPPAPPPSPAEDPTVS) is disordered.

The sequence is that of Myocilin opposite strand protein from Homo sapiens (Human).